A 275-amino-acid polypeptide reads, in one-letter code: MRKYQEEIINALGVNSQIDPQAEVTKRVQFICDFLQTTKMKALVLGISGGQDSSLAGRLSQLAVEKLREETGDNEYQFIAVRLPYGEQADESDAMFAINDFIKPDKIMRVNIKAATDAMVASLNEAGTPISDFSKGNIKARERMIVQYAIGGENKGAVVGTDHAAEAVTGFYTKFGDGGADITPLSGLDKRQGKALLQYLGAPAKLYDKTPTADLEEDKPMRPDEEALGVRYDEIDDYLEGREVSPAAAEKIESWYRRTQHKRHLPIAPYDTWWK.

46-53 (GISGGQDS) serves as a coordination point for ATP. Residue D52 coordinates Mg(2+). Deamido-NAD(+) is bound at residue R141. T161 is a binding site for ATP. Residue E166 participates in Mg(2+) binding. Deamido-NAD(+)-binding residues include K174 and D181. Residues K190 and T212 each contribute to the ATP site. 261-262 (HK) contacts deamido-NAD(+).

The protein belongs to the NAD synthetase family. Homodimer.

It carries out the reaction deamido-NAD(+) + NH4(+) + ATP = AMP + diphosphate + NAD(+) + H(+). Its pathway is cofactor biosynthesis; NAD(+) biosynthesis; NAD(+) from deamido-NAD(+) (ammonia route): step 1/1. In terms of biological role, catalyzes the ATP-dependent amidation of deamido-NAD to form NAD. Uses ammonia as a nitrogen source. In Limosilactobacillus reuteri (strain DSM 20016) (Lactobacillus reuteri), this protein is NH(3)-dependent NAD(+) synthetase.